The following is a 204-amino-acid chain: Anthranilate synthase component 2 (204 aa).

A Glutamine amidotransferase type-1 domain is found at 13 to 204; it reads RVLVVDNYDS…KNFLEDPWTR (192 aa). Residue 64–66 coordinates L-glutamine; sequence GPC. Cys91 (nucleophile; for GATase activity) is an active-site residue. L-glutamine is bound by residues Gln95 and 141-142; that span reads SL. Active-site for GATase activity residues include His181 and Glu183.

As to quaternary structure, heterotetramer consisting of two non-identical subunits: a beta subunit (TrpG) and a large alpha subunit (TrpE).

It carries out the reaction chorismate + L-glutamine = anthranilate + pyruvate + L-glutamate + H(+). Its pathway is amino-acid biosynthesis; L-tryptophan biosynthesis; L-tryptophan from chorismate: step 1/5. Functionally, part of a heterotetrameric complex that catalyzes the two-step biosynthesis of anthranilate, an intermediate in the biosynthesis of L-tryptophan. In the first step, the glutamine-binding beta subunit (TrpG) of anthranilate synthase (AS) provides the glutamine amidotransferase activity which generates ammonia as a substrate that, along with chorismate, is used in the second step, catalyzed by the large alpha subunit of AS (TrpE) to produce anthranilate. In the absence of TrpG, TrpE can synthesize anthranilate directly from chorismate and high concentrations of ammonia. This Thermus thermophilus (strain ATCC 27634 / DSM 579 / HB8) protein is Anthranilate synthase component 2 (trpG).